The following is a 102-amino-acid chain: Urease subunit beta (102 aa).

This sequence belongs to the urease beta subunit family. Heterotrimer of UreA (gamma), UreB (beta) and UreC (alpha) subunits. Three heterotrimers associate to form the active enzyme.

It localises to the cytoplasm. The enzyme catalyses urea + 2 H2O + H(+) = hydrogencarbonate + 2 NH4(+). It functions in the pathway nitrogen metabolism; urea degradation; CO(2) and NH(3) from urea (urease route): step 1/1. The polypeptide is Urease subunit beta (Bordetella pertussis (strain Tohama I / ATCC BAA-589 / NCTC 13251)).